The following is a 258-amino-acid chain: Acetylglutamate kinase (258 aa).

Substrate-binding positions include 44–45 (GG), Arg-66, and Asn-158. Residues 181 to 186 (DVSGIL) and 209 to 211 (IIT) each bind ATP.

Belongs to the acetylglutamate kinase family. ArgB subfamily. Homodimer.

The protein localises to the cytoplasm. The catalysed reaction is N-acetyl-L-glutamate + ATP = N-acetyl-L-glutamyl 5-phosphate + ADP. It participates in amino-acid biosynthesis; L-arginine biosynthesis; N(2)-acetyl-L-ornithine from L-glutamate: step 2/4. Catalyzes the ATP-dependent phosphorylation of N-acetyl-L-glutamate. The chain is Acetylglutamate kinase from Salmonella arizonae (strain ATCC BAA-731 / CDC346-86 / RSK2980).